The following is a 210-amino-acid chain: Cell division protein FtsQ (210 aa).

Residues 1-58 (LQTSEIEVFQLLGLDGSTSLIALDIDAARRKLVQLPWVEDVDIRKVYPKTVEVRLKER) enclose the POTRA domain. A helical transmembrane segment spans residues 8–25 (VFQLLGLDGSTSLIALDI).

Belongs to the FtsQ/DivIB family. FtsQ subfamily.

The protein resides in the cell inner membrane. In terms of biological role, essential cell division protein. The sequence is that of Cell division protein FtsQ from Rhizobium radiobacter (Agrobacterium tumefaciens).